A 570-amino-acid chain; its full sequence is MGTVVSKKENLRNDAISSVAAKVRAARAFGEYLSHTRPENRNRSDHLLSDTFIGQETDSPDISRLNNNNSLQPYSQHTLIVKPSQEELQQGSQSAPLPTSSKRRLSVERSLSSEDQQNQRRTESSVKPARVYTITRERDMLGGQGSEESLELEVLKRTSEPSQINPPTGLRGSHHRGSQHRGNNGPTHQHHYGHAPMAQPLQSSGSTHNIRDWGSRRSRSREDCTPDCVACIRPHCQSQRSLDLDTSPHGGGKQHKKLERMYSEDRVSSEDREDHTNSWFPKENMFSFQTATTTMQAISNFRKHLRMVGSRRVKAQTFVDRKAKSFSRSWSDPTPVKPDSLHDSRDSGDLQASSGNLDEEDCDDVDWEEERELERVACEGDDFIPPKLMLISSKVPKAEYVPNIIRRDDPSIIPILYDHEHATFDDILEEIEKKLTAYRKGCKIWNMLIFCQGGPGHLYLLKNKVATFAKVEKEEGMMQFWKKLGRFMSLLNPEPNLIHIMGCYVLGNANGEKLFQNLKRLMKPHGIEFKSPLELSAQGKEMIEMYFDFRLYRLWKTRQHSKLHDYDDLL.

G2 is lipidated: N-myristoyl glycine. Disordered regions lie at residues 85–224, 239–278, and 327–362; these read QEEL…REDC, QRSL…HTNS, and SRSW…EEDC. Residues 86 to 99 are compositionally biased toward polar residues; sequence EELQQGSQSAPLPT. Composition is skewed to basic and acidic residues over residues 209 to 224, 259 to 276, and 339 to 348; these read NIRD…REDC, ERMY…EDHT, and DSLHDSRDSG.

Belongs to the NSMF family.

It localises to the nucleus. Its subcellular location is the nucleus envelope. It is found in the nucleus membrane. The protein resides in the nucleus matrix. The protein localises to the cytoplasm. It localises to the cell cortex. Its subcellular location is the cytoskeleton. It is found in the cell membrane. The protein resides in the cell projection. The protein localises to the dendrite. It localises to the synapse. Its subcellular location is the synaptosome. It is found in the postsynaptic density. The protein resides in the membrane. Its function is as follows. Stimulates outgrowth of olfactory axons and migration of hypophysiotropic gonadotropin-releasing hormone 3 (GnRH3) neurons. May couple NMDA-sensitive glutamate receptor signaling to the nucleus and trigger long-lasting changes in the cytoarchitecture of dendrites and spine synapse processes. In Danio rerio (Zebrafish), this protein is NMDA receptor synaptonuclear signaling and neuronal migration factor (nsmf).